A 285-amino-acid polypeptide reads, in one-letter code: 2-dehydro-3-deoxyphosphooctonate aldolase (285 aa).

The protein belongs to the KdsA family.

The protein localises to the cytoplasm. It carries out the reaction D-arabinose 5-phosphate + phosphoenolpyruvate + H2O = 3-deoxy-alpha-D-manno-2-octulosonate-8-phosphate + phosphate. It functions in the pathway carbohydrate biosynthesis; 3-deoxy-D-manno-octulosonate biosynthesis; 3-deoxy-D-manno-octulosonate from D-ribulose 5-phosphate: step 2/3. Its pathway is bacterial outer membrane biogenesis; lipopolysaccharide biosynthesis. This Acinetobacter baumannii (strain SDF) protein is 2-dehydro-3-deoxyphosphooctonate aldolase.